We begin with the raw amino-acid sequence, 530 residues long: UDP-glucuronosyltransferase 2B14 (530 aa).

An N-terminal signal peptide occupies residues 1–24 (MSVKHVSVLLLLLQLSCCFRTGSC). N134 and N316 each carry an N-linked (GlcNAc...) asparagine glycan. A helical transmembrane segment spans residues 494-510 (VVGFLVSCAAFLIFLVI).

Belongs to the UDP-glycosyltransferase family.

Its subcellular location is the microsome membrane. The protein resides in the endoplasmic reticulum membrane. The enzyme catalyses glucuronate acceptor + UDP-alpha-D-glucuronate = acceptor beta-D-glucuronoside + UDP + H(+). Its function is as follows. UDPGT is of major importance in the conjugation and subsequent elimination of potentially toxic xenobiotics and endogenous compounds. This chain is UDP-glucuronosyltransferase 2B14 (UGT2B14), found in Oryctolagus cuniculus (Rabbit).